Consider the following 459-residue polypeptide: tRNA modification GTPase MnmE (459 aa).

Positions 20, 85, and 124 each coordinate (6S)-5-formyl-5,6,7,8-tetrahydrofolate. The TrmE-type G domain maps to 221–380 (GLSTVIIGRP…LEEAIQSLFY (160 aa)). Residue asparagine 231 participates in K(+) binding. Residues 231-236 (NVGKSS), 250-256 (TDIPGTT), and 275-278 (DTAG) contribute to the GTP site. Residue serine 235 participates in Mg(2+) binding. Residues threonine 250, isoleucine 252, and threonine 255 each coordinate K(+). Mg(2+) is bound at residue threonine 256. Lysine 459 is a (6S)-5-formyl-5,6,7,8-tetrahydrofolate binding site.

The protein belongs to the TRAFAC class TrmE-Era-EngA-EngB-Septin-like GTPase superfamily. TrmE GTPase family. In terms of assembly, homodimer. Heterotetramer of two MnmE and two MnmG subunits. It depends on K(+) as a cofactor.

Its subcellular location is the cytoplasm. Exhibits a very high intrinsic GTPase hydrolysis rate. Involved in the addition of a carboxymethylaminomethyl (cmnm) group at the wobble position (U34) of certain tRNAs, forming tRNA-cmnm(5)s(2)U34. The chain is tRNA modification GTPase MnmE from Bacillus subtilis (strain 168).